A 287-amino-acid chain; its full sequence is MQVQKSFKDKKTSGTLYLVPTPIGNLQDMTFRAVATLKEVDFICAEDTRNTGLLLKHFDIATKQISFHEHNSYEKIPDLIDLLISGRSLAQVSDAGMPSISDPGHDLVKAAIDSDIAVVALPGASAGITALIASGLAPQPHVFYGFLPRKAGQQKAFFEDKHHYTETQMFCESPYRIKDTLTNMLACYGDRQVVLVRELTKLFEEYQRGSISEILSYLEETPLKGECLLIVAGAQVDSEIELTADVDLVSLVQKEIQAGAKPNQAIKTIAKAYQVNRQELYQQFHDL.

The protein belongs to the methyltransferase superfamily. RsmI family.

It localises to the cytoplasm. The catalysed reaction is cytidine(1402) in 16S rRNA + S-adenosyl-L-methionine = 2'-O-methylcytidine(1402) in 16S rRNA + S-adenosyl-L-homocysteine + H(+). In terms of biological role, catalyzes the 2'-O-methylation of the ribose of cytidine 1402 (C1402) in 16S rRNA. The chain is Ribosomal RNA small subunit methyltransferase I from Streptococcus pyogenes serotype M6 (strain ATCC BAA-946 / MGAS10394).